The sequence spans 639 residues: MNSWFANISVNLKLGLGFGLVLVLTGLLALTGWTSLGSLIDRSNWMGDIGQLNKDLTDLRIARLQYMIANGDDTAAANTLAKLDAFSKQQAYLATTFKSPENVKLLGELGDTISAYKLSLNKMRQGYDATRAARVSMDSSAIRADQAMDALSQEVMARPEADSVRLAQYQLISKARQQLLQVRIDVRGYIAENSSANEQAALRQLDAALADTDNLKRQLPSEDARLQQFENAVLAYRDAVRQFRDAVANITTSRAEMTVQGADIVKRSDALYQIQLERRDIESTQARSLQAIATLLALLVGVLAAVLITRQITRPLQDTLVAVEKIASGDLTQHMRVTRRDELGVLQQGIARMGTTLRELISGIRDGVTQIASAAEELSAVTEQTSAGANSQKVETDQVATAMHEMAATVQEVARNAEQASHAATGADDEARAGDRVVGEAIGQIERLAEDMHRSTEAMNLLQQESQKIGSVMDVIKSVAEQTNLLALNAAIEAARAGEAGRGFAVVADEVRGLAQRTQKSTEEIEELIASLQHGTQQVANAMQGSRALTDSSVELARKAGSSLESITSTVSSIQSMNQQIAAAAEQQSAVAEEISRSILNVRDVSEQTAAASDETAASSVELARLGGQLQTLVSQFRV.

At methionine 1–lysine 13 the chain is on the cytoplasmic side. Residues leucine 14 to threonine 34 traverse the membrane as a helical segment. Topologically, residues serine 35–serine 288 are periplasmic. In terms of domain architecture, HBM spans aspartate 41 to serine 283. Position 60–65 (arginine 60–glutamine 65) interacts with (S)-malate. Arginine 60–glutamine 65 contributes to the succinate binding site. Acetate-binding residues include aspartate 138, arginine 183, arginine 187, and tyrosine 236. Residues alanine 191–aspartate 245 adopt a coiled-coil conformation. (S)-malate contacts are provided by arginine 254 and threonine 258. Arginine 254 contributes to the succinate binding site. The helical transmembrane segment at leucine 289–threonine 309 threads the bilayer. The region spanning arginine 310–serine 362 is the HAMP domain. Residues arginine 310–valine 639 are Cytoplasmic-facing. Residues glycine 367 to arginine 603 enclose the Methyl-accepting transducer domain.

It belongs to the methyl-accepting chemotaxis (MCP) protein family. As to quaternary structure, homodimer. Exists as a mixture of monomers and dimers in solution. Ligand binding stabilizes the dimeric form. In terms of processing, methylated by CheR2.

The protein localises to the cell membrane. Binding of citrate to the ligand-binding domain reduces the chemotaxis towards the strong attractants such as malate and succinate. However, in physiologically relevant niches, citrate is mostly complexed with magnesium or calcium ions, and does not bind McpS. Chemotactic-signal transducers respond to changes in the concentration of attractants and repellents in the environment, transduce a signal from the outside to the inside of the cell, and facilitate sensory adaptation through the variation of the level of methylation. McpS is a specific chemoreceptor for 6 tricarboxylic acid (TCA) cycle intermediates (succinate, fumarate, malate, oxaloacetate, citrate and isocitrate), butyrate and acetate. Malate, succinate, fumarate and oxaloacetate cause the strongest chemotactic response. This Pseudomonas putida (strain ATCC 47054 / DSM 6125 / CFBP 8728 / NCIMB 11950 / KT2440) protein is Methyl-accepting chemotaxis protein McpS (mcpS).